We begin with the raw amino-acid sequence, 584 residues long: Kelch domain-containing protein 4 (584 aa).

Residues 1–10 show a composition bias toward basic residues; that stretch reads MGKKGKKEKK. 2 disordered regions span residues 1–33 and 50–69; these read MGKK…RKEE and KTQV…NASL. Over residues 11 to 24 the composition is skewed to basic and acidic residues; sequence GRGAEKTAAKMEKK. 5 Kelch repeats span residues 77–129, 133–187, 188–238, 243–289, and 308–361; these read ELIL…VVPQ, QLWV…AWKR, QLIL…LMAV, SIAI…INPS, and QILV…RRGK. 3 disordered regions span residues 348–381, 405–433, and 482–533; these read KGPK…APEP, SGLG…CPRS, and PKSQ…EQFE. Ser-418 carries the post-translational modification Phosphoserine. One copy of the Kelch 6 repeat lies at 443–494; it reads LLYVYGGMFEAGDRQVTLSDLYCLDLHKMEEWKTLVEMDPKSQEWLEESDSE. A compositionally biased stretch (acidic residues) spans 487 to 519; it reads WLEESDSEEDSSSDEESEDGEDKDQEDSAEEGA. Residues 520-533 are compositionally biased toward basic and acidic residues; sequence DPQHPEVARGEQFE.

The polypeptide is Kelch domain-containing protein 4 (Klhdc4) (Mus musculus (Mouse)).